The primary structure comprises 573 residues: MKGFLLLSLSLLLVTVGSSSQASSTTSSSGGTSPPTTVQSQSPGSSSQASTTTSSSGGASPPTTVQSQSPGSSSQASTTTSSSGGASPPTTVQSQSPGSSSQASTTTSSSGGASPPTTVQSQSPGSSSQASTTTSSSGGASPPTTVQSQSPGSSSQASTTTSSSGGASPPTTVQSQSPGSSSQVSTTTSSSGGASPPTTVQSQSPGSSSQPGPTQPSGGASSSTVPSGGSTGPSDLCNPNPCKGTASCVKLHSKHFCLCLEGYYYNSSLSSCVKGTTFPGDISMSVSETANLEDENSVGYQELYNSVTDFFETTFNKTDYGQTVIIKVSTAPSRSARSAMRDATKDVSVSVVNIFGADTKETEKSVSSAIETAIKTSGNVKDYVSINLCDHYGCVGNDSSKCQDILQCTCKPGLDRLNPQVPFCVAVTCSQPCNAEEKEQCLKMDNGVMDCVCMPGYQRANGNRKCEECPFGYSGMNCKDQFQLILTIVGTIAGALILILLIAFIVSARSKNKKKDGEEQRLIEDDFHNLRLRQTGFSNLGADNSIFPKVRTGVPSQTPNPYANQRSMPRPDY.

An N-terminal signal peptide occupies residues 1 to 17 (MKGFLLLSLSLLLVTVG). Residues 16-234 (VGSSSQASST…VPSGGSTGPS (219 aa)) are compositionally biased toward low complexity. Residues 16–237 (VGSSSQASST…GGSTGPSDLC (222 aa)) form a disordered region. Topologically, residues 18 to 480 (SSSQASSTTS…FGYSGMNCKD (463 aa)) are extracellular. Positions 233-273 (PSDLCNPNPCKGTASCVKLHSKHFCLCLEGYYYNSSLSSCV) constitute an EGF-like 1 domain. 3 cysteine pairs are disulfide-bonded: C237-C248, C242-C257, and C259-C272. 3 N-linked (GlcNAc...) asparagine glycosylation sites follow: N266, N316, and N397. Residues 274-391 (KGTTFPGDIS…DYVSINLCDH (118 aa)) enclose the SEA domain. EGF-like domains lie at 385-425 (SINL…PFCV) and 425-467 (VAVT…RKCE). Intrachain disulfides connect C389-C402, C394-C408, C410-C424, C429-C441, C433-C451, and C453-C466. Residues 481 to 508 (QFQLILTIVGTIAGALILILLIAFIVSA) traverse the membrane as a helical segment. At 509-573 (RSKNKKKDGE…NQRSMPRPDY (65 aa)) the chain is on the cytoplasmic side. The disordered stretch occupies residues 548–573 (PKVRTGVPSQTPNPYANQRSMPRPDY). Residues 554–567 (VPSQTPNPYANQRS) are compositionally biased toward polar residues.

In terms of assembly, homodimer of beta subunits. Cleaved into two subunits, alpha and beta, probably between the first EGF domain and the SEA domain. Beta subunit contains the cytoplasmic tail and alpha subunit the extracellular tail. The homooligomerization into dimers is dependent on intrachain disulfide bonds. Post-translationally, highly N-glycosylated.

The protein localises to the cell membrane. It localises to the secreted. Its function is as follows. Epithelial and hemopoietic transmembrane mucin that may play a role in cell signaling. The chain is Mucin-13 (Muc13) from Mus musculus (Mouse).